Reading from the N-terminus, the 394-residue chain is MSKKVALAYSGGLDTSICIPLLKEEYGYDEVITVAVDVGQPKEDVAQAEEKAKKISDKHFTLDVREEFVNDYIFPLIRANGDYEGYVMGTSIARPLIAKKVVEIAEQEGAVALAHGCTGKGNDQLRFEAVFRLTDMDVIAPMREMNLTREWEIEYAKEHGIPVGVTTAKPWSVDENIWSRSIEGGKLEDPGYIPPEEIYKWTTAPEDAPDAQIIEIGFENGVPVSLDGQKMGGVELIEKMNIIAGTHGVGRTDMIEDRVLGLKARENYEHPAATVLLAAHKDLEKLVLTRAELKFKATVDAQWSELAYYGLVDEPLYDDLNAFIDKTQERVAGTVTMKLYKGSVLVLARTSPYALYSEELVSFDGTSIDQKDAEGFAKYHGFQARLYRKFVVKN.

8 to 16 provides a ligand contact to ATP; that stretch reads AYSGGLDTS. The L-citrulline site is built by tyrosine 86 and serine 91. An ATP-binding site is contributed by glycine 116. L-aspartate-binding residues include threonine 118, asparagine 122, and aspartate 123. Asparagine 122 is an L-citrulline binding site. Positions 126, 172, 181, 256, and 268 each coordinate L-citrulline.

This sequence belongs to the argininosuccinate synthase family. Type 1 subfamily. Homotetramer.

Its subcellular location is the cytoplasm. The catalysed reaction is L-citrulline + L-aspartate + ATP = 2-(N(omega)-L-arginino)succinate + AMP + diphosphate + H(+). Its pathway is amino-acid biosynthesis; L-arginine biosynthesis; L-arginine from L-ornithine and carbamoyl phosphate: step 2/3. The chain is Argininosuccinate synthase from Methanococcoides burtonii (strain DSM 6242 / NBRC 107633 / OCM 468 / ACE-M).